The chain runs to 125 residues: Ribonuclease P protein component (125 aa).

The protein belongs to the RnpA family. In terms of assembly, consists of a catalytic RNA component (M1 or rnpB) and a protein subunit.

It catalyses the reaction Endonucleolytic cleavage of RNA, removing 5'-extranucleotides from tRNA precursor.. Its function is as follows. RNaseP catalyzes the removal of the 5'-leader sequence from pre-tRNA to produce the mature 5'-terminus. It can also cleave other RNA substrates such as 4.5S RNA. The protein component plays an auxiliary but essential role in vivo by binding to the 5'-leader sequence and broadening the substrate specificity of the ribozyme. In Ruegeria pomeroyi (strain ATCC 700808 / DSM 15171 / DSS-3) (Silicibacter pomeroyi), this protein is Ribonuclease P protein component.